A 195-amino-acid chain; its full sequence is Peptidyl-tRNA hydrolase (195 aa).

Tyr-17 is a binding site for tRNA. The active-site Proton acceptor is His-22. The tRNA site is built by Tyr-68, Asn-70, and Asn-116.

This sequence belongs to the PTH family. As to quaternary structure, monomer.

Its subcellular location is the cytoplasm. The catalysed reaction is an N-acyl-L-alpha-aminoacyl-tRNA + H2O = an N-acyl-L-amino acid + a tRNA + H(+). In terms of biological role, hydrolyzes ribosome-free peptidyl-tRNAs (with 1 or more amino acids incorporated), which drop off the ribosome during protein synthesis, or as a result of ribosome stalling. Its function is as follows. Catalyzes the release of premature peptidyl moieties from peptidyl-tRNA molecules trapped in stalled 50S ribosomal subunits, and thus maintains levels of free tRNAs and 50S ribosomes. This is Peptidyl-tRNA hydrolase from Shewanella sp. (strain ANA-3).